The following is a 396-amino-acid chain: Chalcone synthase A (396 aa).

Cys170 is a catalytic residue.

The protein belongs to the thiolase-like superfamily. Chalcone/stilbene synthases family.

The catalysed reaction is (E)-4-coumaroyl-CoA + 3 malonyl-CoA + 3 H(+) = 2',4,4',6'-tetrahydroxychalcone + 3 CO2 + 4 CoA. The protein operates within secondary metabolite biosynthesis; flavonoid biosynthesis. The primary product of this enzyme is 4,2',4',6'-tetrahydroxychalcone (also termed naringenin-chalcone or chalcone) which can under specific conditions spontaneously isomerize into naringenin. This chain is Chalcone synthase A (CHSA), found in Ipomoea purpurea (Common morning glory).